Consider the following 207-residue polypeptide: Peptidyl-tRNA hydrolase (207 aa).

TRNA is bound at residue tyrosine 19. Catalysis depends on histidine 24, which acts as the Proton acceptor. TRNA is bound by residues phenylalanine 70, asparagine 72, and asparagine 118.

It belongs to the PTH family. Monomer.

It localises to the cytoplasm. It catalyses the reaction an N-acyl-L-alpha-aminoacyl-tRNA + H2O = an N-acyl-L-amino acid + a tRNA + H(+). Functionally, hydrolyzes ribosome-free peptidyl-tRNAs (with 1 or more amino acids incorporated), which drop off the ribosome during protein synthesis, or as a result of ribosome stalling. Its function is as follows. Catalyzes the release of premature peptidyl moieties from peptidyl-tRNA molecules trapped in stalled 50S ribosomal subunits, and thus maintains levels of free tRNAs and 50S ribosomes. In Synechococcus sp. (strain CC9311), this protein is Peptidyl-tRNA hydrolase.